Reading from the N-terminus, the 442-residue chain is Proline--tRNA ligase (442 aa).

This sequence belongs to the class-II aminoacyl-tRNA synthetase family. ProS type 2 subfamily. In terms of assembly, homodimer.

The protein resides in the cytoplasm. It carries out the reaction tRNA(Pro) + L-proline + ATP = L-prolyl-tRNA(Pro) + AMP + diphosphate. Functionally, catalyzes the attachment of proline to tRNA(Pro) in a two-step reaction: proline is first activated by ATP to form Pro-AMP and then transferred to the acceptor end of tRNA(Pro). The chain is Proline--tRNA ligase from Brucella suis (strain ATCC 23445 / NCTC 10510).